We begin with the raw amino-acid sequence, 103 residues long: Flagellar hook-basal body complex protein FliE (103 aa).

This sequence belongs to the FliE family.

It localises to the bacterial flagellum basal body. This chain is Flagellar hook-basal body complex protein FliE, found in Erwinia tasmaniensis (strain DSM 17950 / CFBP 7177 / CIP 109463 / NCPPB 4357 / Et1/99).